We begin with the raw amino-acid sequence, 220 residues long: Urease accessory protein UreG (220 aa).

Glycine 18–threonine 25 serves as a coordination point for GTP.

It belongs to the SIMIBI class G3E GTPase family. UreG subfamily. As to quaternary structure, homodimer. UreD, UreF and UreG form a complex that acts as a GTP-hydrolysis-dependent molecular chaperone, activating the urease apoprotein by helping to assemble the nickel containing metallocenter of UreC. The UreE protein probably delivers the nickel.

Its subcellular location is the cytoplasm. In terms of biological role, facilitates the functional incorporation of the urease nickel metallocenter. This process requires GTP hydrolysis, probably effectuated by UreG. This chain is Urease accessory protein UreG, found in Yersinia pestis.